The sequence spans 318 residues: Methionyl-tRNA formyltransferase (318 aa).

Residue 110-113 (SLLP) participates in (6S)-5,6,7,8-tetrahydrofolate binding.

Belongs to the Fmt family.

The enzyme catalyses L-methionyl-tRNA(fMet) + (6R)-10-formyltetrahydrofolate = N-formyl-L-methionyl-tRNA(fMet) + (6S)-5,6,7,8-tetrahydrofolate + H(+). Functionally, attaches a formyl group to the free amino group of methionyl-tRNA(fMet). The formyl group appears to play a dual role in the initiator identity of N-formylmethionyl-tRNA by promoting its recognition by IF2 and preventing the misappropriation of this tRNA by the elongation apparatus. The chain is Methionyl-tRNA formyltransferase from Geobacillus sp. (strain WCH70).